Reading from the N-terminus, the 350-residue chain is Xylene/toluene monooxygenase electron transfer component XylA (350 aa).

Residues 16–108 (PESTVSVRGQ…DLEIELDTVL (93 aa)) form the 2Fe-2S ferredoxin-type domain. Residues cysteine 52, cysteine 57, cysteine 60, and cysteine 92 each coordinate [2Fe-2S] cluster. Positions 109–350 (GQALVPIETS…ADRFYNRPPC (242 aa)) are ferredoxin--NADH reductase. Positions 114–213 (PIETSALISK…RAPYGQFGLH (100 aa)) constitute an FAD-binding FR-type domain.

Belongs to the bacterial ring-hydroxylating dioxygenase ferredoxin reductase family. Monomer. The xylene/toluene monooxygenase is composed of two subunits: the electron transfer component XylA and the hydroxylase component XylM. FAD is required as a cofactor. Requires [2Fe-2S] cluster as cofactor.

The protein localises to the cell inner membrane. It carries out the reaction 2 reduced [2Fe-2S]-[ferredoxin] + NAD(+) + H(+) = 2 oxidized [2Fe-2S]-[ferredoxin] + NADH. With respect to regulation, the reductase activity is completely inhibited by quercetin (a common inhibitor of mammalian oxidoreductases) and p-chloromercuribenzoate, but not by iodoacetimide, N-ethylmaleimide and pyrrazole. In terms of biological role, component of a monooxygenase that catalyzes the first step in the degradation of xylenes and toluenes. XylA is responsible for the transport of electrons from the electron donor NADH to the terminal hydroxylase component, XylM. The sequence is that of Xylene/toluene monooxygenase electron transfer component XylA from Pseudomonas putida (Arthrobacter siderocapsulatus).